The following is a 148-amino-acid chain: Large ribosomal subunit protein uL15 (148 aa).

Basic residues predominate over residues 1-30 (MSTHKKKTRKLRGHVSHGHGRIGKHRKHPG). A disordered region spans residues 1-37 (MSTHKKKTRKLRGHVSHGHGRIGKHRKHPGGRGNAGG).

The protein belongs to the universal ribosomal protein uL15 family.

This chain is Large ribosomal subunit protein uL15 (RpL27A), found in Tenebrio molitor (Yellow mealworm beetle).